The sequence spans 434 residues: APETALA2-like protein 2 (434 aa).

Positions 1–116 (MLLDLNVESP…KTRRGPRSRS (116 aa)) are disordered. A compositionally biased stretch (low complexity) spans 12–23 (RSGTSSSSVLNS). A compositionally biased stretch (gly residues) spans 25-38 (DAGGGGGGGGGGGL). A compositionally biased stretch (pro residues) spans 72–87 (LPPPPPAAPSPAPAWQ). A compositionally biased stretch (basic residues) spans 104-113 (VAKKTRRGPR). The Nuclear localization signal motif lies at 106 to 115 (KKTRRGPRSR). DNA-binding regions (AP2/ERF) lie at residues 118–174 (QYRG…INFN) and 210–267 (KFRG…TNFE). Residues 291–295 (LDLRI) carry the EAR motif.

The protein belongs to the AP2/ERF transcription factor family. AP2 subfamily. May form homodimer. Interacts with TPR2/ASP1. Highly expressed in developing panicles and in young seedlings. Present at low levels at all developmental stages.

The protein resides in the nucleus. Functionally, probable transcription factor. Involved in spikelet transition. Together with SNB, controls synergistically inflorescence architecture and floral meristem establishment via the regulation of spatio-temporal expression of B- and E-function floral organ identity genes in the lodicules and of spikelet meristem genes. Prevents lemma and palea elongation as well as grain growth. The protein is APETALA2-like protein 2 of Oryza sativa subsp. japonica (Rice).